Consider the following 568-residue polypeptide: Sulfite reductase [NADPH] hemoprotein beta-component (568 aa).

C425, C431, C470, and C474 together coordinate [4Fe-4S] cluster. A siroheme-binding site is contributed by C474.

Belongs to the nitrite and sulfite reductase 4Fe-4S domain family. Alpha(8)-beta(8). The alpha component is a flavoprotein, the beta component is a hemoprotein. Siroheme serves as cofactor. Requires [4Fe-4S] cluster as cofactor.

The catalysed reaction is hydrogen sulfide + 3 NADP(+) + 3 H2O = sulfite + 3 NADPH + 4 H(+). Its pathway is sulfur metabolism; hydrogen sulfide biosynthesis; hydrogen sulfide from sulfite (NADPH route): step 1/1. In terms of biological role, component of the sulfite reductase complex that catalyzes the 6-electron reduction of sulfite to sulfide. This is one of several activities required for the biosynthesis of L-cysteine from sulfate. The polypeptide is Sulfite reductase [NADPH] hemoprotein beta-component (Xanthomonas campestris pv. campestris (strain ATCC 33913 / DSM 3586 / NCPPB 528 / LMG 568 / P 25)).